The chain runs to 459 residues: Cysteine--tRNA ligase (459 aa).

Cys-27 is a binding site for Zn(2+). Residues 29-39 (PTVYNFVHIGN) carry the 'HIGH' region motif. The Zn(2+) site is built by Cys-211, His-236, and Glu-240. A 'KMSKS' region motif is present at residues 269–273 (KMSKS). Lys-272 is an ATP binding site.

Belongs to the class-I aminoacyl-tRNA synthetase family. Monomer. Zn(2+) serves as cofactor.

The protein resides in the cytoplasm. The catalysed reaction is tRNA(Cys) + L-cysteine + ATP = L-cysteinyl-tRNA(Cys) + AMP + diphosphate. In Ehrlichia canis (strain Jake), this protein is Cysteine--tRNA ligase.